A 135-amino-acid chain; its full sequence is MSALHQLSALNFLVIGLGAAFGAWTRWLLGLSLNPLFVALPLGTLAANVIGGYLVGVAVGIFHINTHFSLAWKLFAITGFLGGLTTFSTFSAEVVERLLAGQPAWAIGLASVHLAGSLTATYLGLLTVGATRIWA.

4 consecutive transmembrane segments (helical) span residues 12–32 (FLVI…LGLS), 42–62 (LGTL…VGIF), 70–90 (LAWK…FSTF), and 106–126 (AIGL…LGLL). The Na(+) site is built by Gly82 and Thr85.

It belongs to the fluoride channel Fluc/FEX (TC 1.A.43) family.

The protein localises to the cell inner membrane. The enzyme catalyses fluoride(in) = fluoride(out). Na(+) is not transported, but it plays an essential structural role and its presence is essential for fluoride channel function. Functionally, fluoride-specific ion channel. Important for reducing fluoride concentration in the cell, thus reducing its toxicity. In Dechloromonas aromatica (strain RCB), this protein is Fluoride-specific ion channel FluC.